The sequence spans 177 residues: Nucleoside triphosphate/diphosphate phosphatase (177 aa).

The Proton donor role is filled by Arg-23. Positions 87, 103, 105, 107, 120, and 123 each coordinate Mg(2+).

The protein belongs to the Ntdp family. Mg(2+) serves as cofactor.

The enzyme catalyses a ribonucleoside 5'-triphosphate + H2O = a ribonucleoside 5'-diphosphate + phosphate + H(+). It catalyses the reaction a ribonucleoside 5'-diphosphate + H2O = a ribonucleoside 5'-phosphate + phosphate + H(+). In terms of biological role, has nucleoside phosphatase activity towards nucleoside triphosphates and nucleoside diphosphates. The polypeptide is Nucleoside triphosphate/diphosphate phosphatase (Streptococcus gordonii (strain Challis / ATCC 35105 / BCRC 15272 / CH1 / DL1 / V288)).